The sequence spans 443 residues: RILP-like protein homolog (443 aa).

Positions 8 to 96 constitute an RH1 domain; that stretch reads EMGEMVLDAI…ESEKLEKAEF (89 aa). The stretch at 59–315 forms a coiled coil; it reads LELLEALATK…TLNEQLAELK (257 aa). The region spanning 282-401 is the RH2 domain; it reads RPRYTTRELK…KSSESGIRKF (120 aa). A disordered region spans residues 311 to 394; it reads LAELKPPSQA…PDDAPWKKSS (84 aa). Positions 332 to 355 are enriched in acidic residues; that stretch reads DDSDEDDDGHVADNDDDDDEEEAA. Residues 356 to 368 show a composition bias toward low complexity; sequence AEANELEPPAAGE.

The protein belongs to the RILPL family. As to quaternary structure, interacts with Arl8 (in GTP-bound form).

Its subcellular location is the lysosome membrane. Functionally, may have a role in lysosome distribution by interacting with Arl8. This is RILP-like protein homolog from Drosophila melanogaster (Fruit fly).